The sequence spans 474 residues: Lipoprotein lipase (474 aa).

Positions 1-27 (MESKALLLVVLGVWLQSLTAFRGGVAA) are cleaved as a signal peptide. The tract at residues 32-53 (RDFSDIESKFALRTPEDTAEDT) is interaction with GPIHBP1. An intrachain disulfide couples Cys54 to Cys67. A glycan (N-linked (GlcNAc...) asparagine) is linked at Asn70. 3'-nitrotyrosine is present on Tyr121. The active-site Nucleophile is Ser159. The active-site Charge relay system is Asp183. Tyr191 carries the 3'-nitrotyrosine modification. The Ca(2+) site is built by Ala194, Arg197, Ser199, and Asp202. Cys243 and Cys266 form a disulfide bridge. The interval 243–266 (CNIGEAIRVIAERGLGDVDQLVKC) is essential for determining substrate specificity. His268 acts as the Charge relay system in catalysis. Cystine bridges form between Cys291-Cys310 and Cys302-Cys305. The PLAT domain occupies 341–464 (FHYQVKIHFS…KGKDSAVFVK (124 aa)). Tyr343 carries the post-translational modification 3'-nitrotyrosine. Asn386 carries N-linked (GlcNAc...) asparagine glycosylation. The segment at 417-421 (WPDWW) is important for interaction with lipoprotein particles. An important for heparin binding region spans residues 430 to 434 (RIRVK). The interaction with GPIHBP1 stretch occupies residues 443-467 (IFCAREKVSHLQKGKDSAVFVKCHD). Residues Cys445 and Cys465 are joined by a disulfide bond.

Belongs to the AB hydrolase superfamily. Lipase family. In terms of assembly, homodimer. Interacts with GPIHBP1 with 1:1 stoichiometry. Interacts with APOC2; the interaction activates LPL activity in the presence of lipids. Interaction with heparan sulfate proteoglycans is required to protect LPL against loss of activity. Associates with lipoprotein particles in blood plasma. Interacts with LMF1 and SEL1L; interaction with SEL1L is required to prevent aggregation of newly synthesized LPL in the endoplasmic reticulum (ER), and for normal export of LPL from the ER to the extracellular space. Interacts with SORL1; SORL1 acts as a sorting receptor, promoting LPL localization to endosomes and later to lysosomes, leading to degradation of newly synthesized LPL. In terms of processing, tyrosine nitration after lipopolysaccharide (LPS) challenge down-regulates the lipase activity. N-glycosylated. Detected in white and brown adipose tissue and heart muscle, especially at the lumenal surface of capillaries. Detected on capillary endothelium in the lactating mammary gland. Detected in blood plasma (at protein level). Expressed in liver, epididymal fat, heart, psoas muscle, lactating mammary gland, adrenal, lung, and ovary. Highest levels in heart and adrenal gland.

It is found in the cell membrane. It localises to the secreted. The protein localises to the extracellular space. Its subcellular location is the extracellular matrix. The catalysed reaction is a triacylglycerol + H2O = a diacylglycerol + a fatty acid + H(+). It catalyses the reaction a 1,2-diacyl-sn-glycero-3-phosphocholine + H2O = a 2-acyl-sn-glycero-3-phosphocholine + a fatty acid + H(+). The enzyme catalyses 1,2,3-tri-(9Z-octadecenoyl)-glycerol + H2O = di-(9Z)-octadecenoylglycerol + (9Z)-octadecenoate + H(+). It carries out the reaction 1,2-di-(9Z-octadecenoyl)-sn-glycero-3-phosphocholine + H2O = (9Z-octadecenoyl)-sn-glycero-3-phosphocholine + (9Z)-octadecenoate + H(+). The catalysed reaction is 1,2,3-tributanoylglycerol + H2O = dibutanoylglycerol + butanoate + H(+). It catalyses the reaction 1,2-dihexadecanoyl-sn-glycero-3-phosphocholine + H2O = hexadecanoyl-sn-glycero-3-phosphocholine + hexadecanoate + H(+). Its activity is regulated as follows. The apolipoprotein APOC2 acts as a coactivator of LPL activity. Ca(2+) binding promotes protein stability and formation of the active homodimer. Interaction with GPIHBP1 protects LPL against inactivation by ANGPTL4. Its function is as follows. Key enzyme in triglyceride metabolism. Catalyzes the hydrolysis of triglycerides from circulating chylomicrons and very low density lipoproteins (VLDL), and thereby plays an important role in lipid clearance from the blood stream, lipid utilization and storage. Although it has both phospholipase and triglyceride lipase activities it is primarily a triglyceride lipase with low but detectable phospholipase activity. Mediates margination of triglyceride-rich lipoprotein particles in capillaries. Recruited to its site of action on vascular endothelium by binding to GPIHBP1 and cell surface heparan sulfate proteoglycans. This Mus musculus (Mouse) protein is Lipoprotein lipase (Lpl).